Consider the following 322-residue polypeptide: Ribose-phosphate pyrophosphokinase (322 aa).

ATP contacts are provided by residues 43–45 and 102–103; these read DGE and RQ. The Mg(2+) site is built by histidine 137 and aspartate 177. Lysine 201 is a catalytic residue. D-ribose 5-phosphate is bound by residues arginine 203, aspartate 227, and 231-235; that span reads DTAGT.

The protein belongs to the ribose-phosphate pyrophosphokinase family. Class I subfamily. As to quaternary structure, homohexamer. Requires Mg(2+) as cofactor.

It localises to the cytoplasm. The catalysed reaction is D-ribose 5-phosphate + ATP = 5-phospho-alpha-D-ribose 1-diphosphate + AMP + H(+). It functions in the pathway metabolic intermediate biosynthesis; 5-phospho-alpha-D-ribose 1-diphosphate biosynthesis; 5-phospho-alpha-D-ribose 1-diphosphate from D-ribose 5-phosphate (route I): step 1/1. Involved in the biosynthesis of the central metabolite phospho-alpha-D-ribosyl-1-pyrophosphate (PRPP) via the transfer of pyrophosphoryl group from ATP to 1-hydroxyl of ribose-5-phosphate (Rib-5-P). The sequence is that of Ribose-phosphate pyrophosphokinase from Xylella fastidiosa (strain Temecula1 / ATCC 700964).